Reading from the N-terminus, the 406-residue chain is uncharacterized protein (406 aa).

To S.pombe SpAC12C2.04.

It is found in the cytoplasm. Its subcellular location is the nucleus. This is an uncharacterized protein from Schizosaccharomyces pombe (strain 972 / ATCC 24843) (Fission yeast).